The chain runs to 528 residues: Glutamate--cysteine ligase (528 aa).

The protein belongs to the glutamate--cysteine ligase type 1 family. Type 1 subfamily.

The catalysed reaction is L-cysteine + L-glutamate + ATP = gamma-L-glutamyl-L-cysteine + ADP + phosphate + H(+). The protein operates within sulfur metabolism; glutathione biosynthesis; glutathione from L-cysteine and L-glutamate: step 1/2. This is Glutamate--cysteine ligase from Janthinobacterium sp. (strain Marseille) (Minibacterium massiliensis).